Consider the following 152-residue polypeptide: Small ribosomal subunit protein uS15 (152 aa).

The span at 1–11 (MAKMHTKRKGK) shows a compositional bias: basic residues. Residues 1–24 (MAKMHTKRKGKSSSTRPNRTEPPE) are disordered.

It belongs to the universal ribosomal protein uS15 family. In terms of assembly, part of the 30S ribosomal subunit.

The polypeptide is Small ribosomal subunit protein uS15 (Methanosarcina mazei (strain ATCC BAA-159 / DSM 3647 / Goe1 / Go1 / JCM 11833 / OCM 88) (Methanosarcina frisia)).